We begin with the raw amino-acid sequence, 503 residues long: UDP-N-acetylmuramoylalanine--D-glutamate ligase (503 aa).

Residue Gly129–Thr135 participates in ATP binding.

The protein belongs to the MurCDEF family.

Its subcellular location is the cytoplasm. The enzyme catalyses UDP-N-acetyl-alpha-D-muramoyl-L-alanine + D-glutamate + ATP = UDP-N-acetyl-alpha-D-muramoyl-L-alanyl-D-glutamate + ADP + phosphate + H(+). The protein operates within cell wall biogenesis; peptidoglycan biosynthesis. In terms of biological role, cell wall formation. Catalyzes the addition of glutamate to the nucleotide precursor UDP-N-acetylmuramoyl-L-alanine (UMA). The polypeptide is UDP-N-acetylmuramoylalanine--D-glutamate ligase (Burkholderia vietnamiensis (strain G4 / LMG 22486) (Burkholderia cepacia (strain R1808))).